Consider the following 337-residue polypeptide: Inner membrane protein YhjD (337 aa).

Positions 1 to 29 are enriched in basic and acidic residues; it reads MTQENEIKRPIQDLEHEPIKPLDNSEKGS. The segment at 1–31 is disordered; that stretch reads MTQENEIKRPIQDLEHEPIKPLDNSEKGSKV. Residues 1 to 74 lie on the Cytoplasmic side of the membrane; that stretch reads MTQENEIKRP…LGNQFGAAIT (74 aa). The helical transmembrane segment at 75-97 threads the bilayer; it reads YFSFLSMIPILMVSFAAGGFVLA. The Periplasmic segment spans residues 98–133; the sequence is SHPMLLQDIFDKILQNISDPTLAATLKNTINTAVQQ. A helical membrane pass occupies residues 134 to 156; it reads RTTVGLVGLAVALYSGINWMGNL. Topologically, residues 157–185 are cytoplasmic; the sequence is REAIRAQSRDVWERSPQDQEKFWVKYLRD. A helical transmembrane segment spans residues 186–208; it reads FISLIGLLIALIVTLSITSVAGS. The Periplasmic portion of the chain corresponds to 209–227; it reads AQQMIISALHLNSIEWLKP. The helical transmembrane segment at 228-250 threads the bilayer; it reads TWRLIGLAISIFANYLLFFWIFW. Residues 251 to 261 are Cytoplasmic-facing; it reads RLPRHRPRKKA. A helical membrane pass occupies residues 262–284; it reads LIRGTFLAAIGFEVIKIVMTYTL. Residues 285–298 lie on the Periplasmic side of the membrane; it reads PSLMKSPSGAAFGS. The helical transmembrane segment at 299–321 threads the bilayer; the sequence is VLGLMAFFYFFARLTLFCAAWIA. Residues 322-337 are Cytoplasmic-facing; it reads TAEYKDDPRMPGKTQP.

It localises to the cell inner membrane. The sequence is that of Inner membrane protein YhjD (yhjD) from Escherichia coli (strain K12).